The sequence spans 1165 residues: Vacuolar segregation protein 7 (1165 aa).

The Cytoplasmic portion of the chain corresponds to 1–919; that stretch reads MTEEDRKLTV…RKSPFVKVKN (919 aa). Residues 118 to 147 are disordered; sequence SVSSTNNNSNNALINHNPLSSHLSNPSSSL. A Phosphoserine modification is found at Ser164. Disordered stretches follow at residues 215 to 241, 274 to 423, 461 to 497, and 560 to 668; these read SNNTAPSTSNNIGSNTPPAPLLPLPSL, KAKN…SEKP, LIFPDSSSQQQQQQQQPPKQQQQQQNHGITSKISAPL, and EPPH…KRPL. The segment covering 216 to 230 has biased composition (polar residues); the sequence is NNTAPSTSNNIGSNT. Residues 334–345 are compositionally biased toward low complexity; sequence TTSTKTAPSTAP. Over residues 346–367 the composition is skewed to polar residues; that stretch reads LGSTDNTQALTASVSSSNADNH. Residues 375 to 391 show a composition bias toward low complexity; sequence SSNNNGNNSNSASNKTN. Residues 393–412 show a composition bias toward polar residues; it reads DIKNSNADLSASTSNNNAIN. The span at 413–423 shows a compositional bias: basic and acidic residues; the sequence is DDSHESNSEKP. 2 stretches are compositionally biased toward low complexity: residues 469-485 and 562-571; these read QQQQQQQQPPKQQQQQQ and PHQLQQQQPP. Polar residues predominate over residues 576–587; sequence SVDSYTSDNPDS. Residues 599–613 are compositionally biased toward low complexity; sequence SLVSLSKVSPHLLSS. The span at 614–662 shows a compositional bias: polar residues; sequence TSSNGNTISCPNVATNSQELEPNNDISTKKSLSNSTLRHSSANRNSNYG. The chain crosses the membrane as a helical; Signal-anchor for type II membrane protein span at residues 920–940; the sequence is FLYLAFVISSLLMTGFILGFL. Over 941 to 1165 the chain is Vacuolar; that stretch reads LATNKELQDV…KDSMVHPGKK (225 aa). Asn1020 and Asn1099 each carry an N-linked (GlcNAc...) asparagine glycan. Positions 1074–1121 are disordered; sequence SPGSREAKHENDDDDDDDGDDGDDENNTNERQYKSKPNARDDKEDDTK. Positions 1085 to 1100 are enriched in acidic residues; sequence DDDDDDDGDDGDDENN. Over residues 1111 to 1121 the composition is skewed to basic and acidic residues; that stretch reads NARDDKEDDTK.

As to quaternary structure, component of the PI(3,5)P2 regulatory complex, composed of ATG18, FIG4, FAB1, VAC14 and VAC7. VAC14 nucleates the assembly of the complex and serves as a scaffold. N-glycosylated.

It localises to the vacuole membrane. The PI(3,5)P2 regulatory complex regulates both the synthesis and turnover of phosphatidylinositol 3,5-bisphosphate (PtdIns(3,5)P2). Positively regulates FAB1 kinase activity. Major activator of FAB1 during hyperosmotic shock and can elevate levels of PtdIns(3,5)P2 in the absence of VAC14 and FIG4. Directly involved in vacuolar membrane scission. Required for normal vacuole acidification, inheritance and morphology. The sequence is that of Vacuolar segregation protein 7 (VAC7) from Saccharomyces cerevisiae (strain ATCC 204508 / S288c) (Baker's yeast).